The chain runs to 412 residues: Multifunctional CCA protein (412 aa).

Positions 8 and 11 each coordinate ATP. CTP-binding residues include Gly8 and Arg11. 2 residues coordinate Mg(2+): Glu21 and Asp23. ATP-binding residues include Arg91, Arg137, and Arg140. The CTP site is built by Arg91, Arg137, and Arg140. In terms of domain architecture, HD spans 228-329; it reads CGIHTLMSLQ…WRLLQRLDVL (102 aa).

This sequence belongs to the tRNA nucleotidyltransferase/poly(A) polymerase family. Bacterial CCA-adding enzyme type 1 subfamily. In terms of assembly, monomer. Can also form homodimers and oligomers. Mg(2+) is required as a cofactor. It depends on Ni(2+) as a cofactor.

It carries out the reaction a tRNA precursor + 2 CTP + ATP = a tRNA with a 3' CCA end + 3 diphosphate. The catalysed reaction is a tRNA with a 3' CCA end + 2 CTP + ATP = a tRNA with a 3' CCACCA end + 3 diphosphate. In terms of biological role, catalyzes the addition and repair of the essential 3'-terminal CCA sequence in tRNAs without using a nucleic acid template. Adds these three nucleotides in the order of C, C, and A to the tRNA nucleotide-73, using CTP and ATP as substrates and producing inorganic pyrophosphate. tRNA 3'-terminal CCA addition is required both for tRNA processing and repair. Also involved in tRNA surveillance by mediating tandem CCA addition to generate a CCACCA at the 3' terminus of unstable tRNAs. While stable tRNAs receive only 3'-terminal CCA, unstable tRNAs are marked with CCACCA and rapidly degraded. In Acinetobacter baumannii (strain ATCC 17978 / DSM 105126 / CIP 53.77 / LMG 1025 / NCDC KC755 / 5377), this protein is Multifunctional CCA protein.